The chain runs to 224 residues: Ribose-5-phosphate isomerase A (224 aa).

Residues T26–T29, D81–D84, and K94–G97 each bind substrate. E103 functions as the Proton acceptor in the catalytic mechanism. Residue K121 participates in substrate binding.

The protein belongs to the ribose 5-phosphate isomerase family. In terms of assembly, homodimer.

The enzyme catalyses aldehydo-D-ribose 5-phosphate = D-ribulose 5-phosphate. It functions in the pathway carbohydrate degradation; pentose phosphate pathway; D-ribose 5-phosphate from D-ribulose 5-phosphate (non-oxidative stage): step 1/1. In terms of biological role, catalyzes the reversible conversion of ribose-5-phosphate to ribulose 5-phosphate. This Listeria monocytogenes serotype 4b (strain CLIP80459) protein is Ribose-5-phosphate isomerase A.